The chain runs to 300 residues: MKIAILSRDGTLYSCKRLREAAIQRGHLVEILDPLSCYMNINPAASSIHYKGRKLPHFDAVIPRIGTAITFYGTAALRQFEMLGSYPLNESVAIARARDKLRSMQLLARQGIDLPVTGIAHSPDDTSDLIDMVGGAPLVVKLVEGTQGIGVVLAETRQAAESVIDAFRGLNAHILVQEYIKEAQGCDIRCLVVGDEVVAAIERRAKEGDFRSNLHRGGVASVARITPQEREIAIKAARTMALDVAGVDILRANRGPLVMEVNASPGLEGIEKTTGIDIAGKMIRWIERHATTEYCLKTGG.

Residues 104–287 (MQLLARQGID…IAGKMIRWIE (184 aa)) enclose the ATP-grasp domain. ATP contacts are provided by residues K141, 178 to 179 (EY), D187, and 211 to 213 (RSN). 3 residues coordinate Mg(2+): D248, E260, and N262. Mn(2+) is bound by residues D248, E260, and N262.

The protein belongs to the RimK family. The cofactor is Mg(2+). Requires Mn(2+) as cofactor.

Its function is as follows. An L-glutamate ligase that catalyzes the ATP-dependent post-translational addition of glutamate residues to the C-terminus of ribosomal protein bS6 (RpsF). Is also able to catalyze the synthesis of poly-alpha-glutamate in vitro, via ATP hydrolysis from unprotected glutamate as substrate. The number of glutamate residues added to either RpsF or to poly-alpha-glutamate changes with pH. The chain is Ribosomal protein bS6--L-glutamate ligase from Escherichia coli O7:K1 (strain IAI39 / ExPEC).